Consider the following 195-residue polypeptide: Proteasome subunit beta 1 (195 aa).

A propeptide spans 1-6 (removed in mature form; by autocatalysis); sequence MEELPA. The Nucleophile role is filled by Thr-7.

Belongs to the peptidase T1B family. The 20S proteasome core is composed of 14 alpha and 14 beta subunits that assemble into four stacked heptameric rings, resulting in a barrel-shaped structure. The two inner rings, each composed of seven catalytic beta subunits, are sandwiched by two outer rings, each composed of seven alpha subunits. The catalytic chamber with the active sites is on the inside of the barrel. Has a gated structure, the ends of the cylinder being occluded by the N-termini of the alpha-subunits. Is capped at one or both ends by the proteasome regulatory ATPase, PAN.

It localises to the cytoplasm. It catalyses the reaction Cleavage of peptide bonds with very broad specificity.. With respect to regulation, the formation of the proteasomal ATPase PAN-20S proteasome complex, via the docking of the C-termini of PAN into the intersubunit pockets in the alpha-rings, triggers opening of the gate for substrate entry. Interconversion between the open-gate and close-gate conformations leads to a dynamic regulation of the 20S proteasome proteolysis activity. Its function is as follows. Component of the proteasome core, a large protease complex with broad specificity involved in protein degradation. The sequence is that of Proteasome subunit beta 1 from Sulfolobus acidocaldarius (strain ATCC 33909 / DSM 639 / JCM 8929 / NBRC 15157 / NCIMB 11770).